A 278-amino-acid chain; its full sequence is Acetyl-coenzyme A carboxylase carboxyl transferase subunit beta (278 aa).

In terms of domain architecture, CoA carboxyltransferase N-terminal spans 23–278; the sequence is LWSKCDSCGA…QLIKLLGHMK (256 aa). Positions 27, 30, 46, and 49 each coordinate Zn(2+). The C4-type zinc-finger motif lies at 27–49; sequence CDSCGAALHKKQLEDHLYTCPHC.

This sequence belongs to the AccD/PCCB family. As to quaternary structure, acetyl-CoA carboxylase is a heterohexamer composed of biotin carboxyl carrier protein (AccB), biotin carboxylase (AccC) and two subunits each of ACCase subunit alpha (AccA) and ACCase subunit beta (AccD). Zn(2+) serves as cofactor.

It localises to the cytoplasm. It carries out the reaction N(6)-carboxybiotinyl-L-lysyl-[protein] + acetyl-CoA = N(6)-biotinyl-L-lysyl-[protein] + malonyl-CoA. It functions in the pathway lipid metabolism; malonyl-CoA biosynthesis; malonyl-CoA from acetyl-CoA: step 1/1. In terms of biological role, component of the acetyl coenzyme A carboxylase (ACC) complex. Biotin carboxylase (BC) catalyzes the carboxylation of biotin on its carrier protein (BCCP) and then the CO(2) group is transferred by the transcarboxylase to acetyl-CoA to form malonyl-CoA. This is Acetyl-coenzyme A carboxylase carboxyl transferase subunit beta from Chlorobaculum tepidum (strain ATCC 49652 / DSM 12025 / NBRC 103806 / TLS) (Chlorobium tepidum).